Reading from the N-terminus, the 298-residue chain is Protease HtpX homolog (298 aa).

2 consecutive transmembrane segments (helical) span residues 14-34 and 39-59; these read ILVMFGFFVLLALIGAAIGYL and VIGGMIIAAIIAVIYMSVIIG. His-144 contributes to the Zn(2+) binding site. The active site involves Glu-145. Position 148 (His-148) interacts with Zn(2+). Helical transmembrane passes span 159 to 179 and 195 to 215; these read IALALASAIAMLVNFAGNFWW and IFAILGSILLIILAPLAATIA. Zn(2+) is bound at residue Glu-224.

This sequence belongs to the peptidase M48B family. The cofactor is Zn(2+).

It is found in the cell membrane. The chain is Protease HtpX homolog from Limosilactobacillus reuteri (strain DSM 20016) (Lactobacillus reuteri).